Consider the following 510-residue polypeptide: Probable cytosol aminopeptidase (510 aa).

Mn(2+) contacts are provided by Lys-268 and Asp-273. The active site involves Lys-280. Residues Asp-291, Asp-350, and Glu-352 each coordinate Mn(2+). The active site involves Arg-354.

This sequence belongs to the peptidase M17 family. Requires Mn(2+) as cofactor.

Its subcellular location is the cytoplasm. It carries out the reaction Release of an N-terminal amino acid, Xaa-|-Yaa-, in which Xaa is preferably Leu, but may be other amino acids including Pro although not Arg or Lys, and Yaa may be Pro. Amino acid amides and methyl esters are also readily hydrolyzed, but rates on arylamides are exceedingly low.. The enzyme catalyses Release of an N-terminal amino acid, preferentially leucine, but not glutamic or aspartic acids.. Presumably involved in the processing and regular turnover of intracellular proteins. Catalyzes the removal of unsubstituted N-terminal amino acids from various peptides. This is Probable cytosol aminopeptidase from Micrococcus luteus (strain ATCC 4698 / DSM 20030 / JCM 1464 / CCM 169 / CCUG 5858 / IAM 1056 / NBRC 3333 / NCIMB 9278 / NCTC 2665 / VKM Ac-2230) (Micrococcus lysodeikticus).